The sequence spans 298 residues: Glutamyl-Q tRNA(Asp) synthetase (298 aa).

L-glutamate is bound by residues 8–12 (RFAPS) and Glu44. The 'HIGH' region signature appears at 11-21 (PSPTGPLHFGS). Positions 100, 102, 123, and 127 each coordinate Zn(2+). L-glutamate contacts are provided by Tyr183 and Arg201. Residues 239–243 (KLSKQ) carry the 'KMSKS' region motif. Residue Lys242 coordinates ATP.

Belongs to the class-I aminoacyl-tRNA synthetase family. GluQ subfamily. The cofactor is Zn(2+).

Its function is as follows. Catalyzes the tRNA-independent activation of glutamate in presence of ATP and the subsequent transfer of glutamate onto a tRNA(Asp). Glutamate is transferred on the 2-amino-5-(4,5-dihydroxy-2-cyclopenten-1-yl) moiety of the queuosine in the wobble position of the QUC anticodon. The polypeptide is Glutamyl-Q tRNA(Asp) synthetase (Burkholderia cenocepacia (strain ATCC BAA-245 / DSM 16553 / LMG 16656 / NCTC 13227 / J2315 / CF5610) (Burkholderia cepacia (strain J2315))).